Consider the following 363-residue polypeptide: tRNA-specific 2-thiouridylase MnmA (363 aa).

ATP is bound by residues 13–20 and Met39; that span reads GLSGGVDS. The interaction with target base in tRNA stretch occupies residues 99 to 101; the sequence is NPD. Residue Cys104 is the Nucleophile of the active site. Cys104 and Cys200 are disulfide-bonded. Position 128 (Gly128) interacts with ATP. The tract at residues 150 to 152 is interaction with tRNA; it reads KDQ. Cys200 (cysteine persulfide intermediate) is an active-site residue. Positions 310 to 311 are interaction with tRNA; it reads RY.

This sequence belongs to the MnmA/TRMU family.

The protein localises to the cytoplasm. It carries out the reaction S-sulfanyl-L-cysteinyl-[protein] + uridine(34) in tRNA + AH2 + ATP = 2-thiouridine(34) in tRNA + L-cysteinyl-[protein] + A + AMP + diphosphate + H(+). In terms of biological role, catalyzes the 2-thiolation of uridine at the wobble position (U34) of tRNA, leading to the formation of s(2)U34. This is tRNA-specific 2-thiouridylase MnmA from Ruthia magnifica subsp. Calyptogena magnifica.